The primary structure comprises 200 residues: Charged multivesicular body protein 6 (200 aa).

Gly-2 carries the N-myristoyl glycine lipid modification. Residues 10-94 adopt a coiled-coil conformation; the sequence is RSRVTEQDKA…ERMVQDIEFT (85 aa). The short motif at 168-179 is the Type-2 MIT-interacting motif element; sequence LELPDVPSEPLP. The tract at residues 169-200 is disordered; that stretch reads ELPDVPSEPLPEEPPEATPVKNRPKPELVAAS.

Belongs to the SNF7 family. Probable core component of the endosomal sorting required for transport complex III (ESCRT-III). ESCRT-III components are thought to multimerize to form a flat lattice on the perimeter membrane of the endosome.

The protein localises to the endomembrane system. It localises to the late endosome membrane. Probable core component of the endosomal sorting required for transport complex III (ESCRT-III) which is involved in multivesicular bodies (MVBs) formation and sorting of endosomal cargo proteins into MVBs. MVBs contain intraluminal vesicles (ILVs) that are generated by invagination and scission from the limiting membrane of the endosome and mostly are delivered to lysosomes enabling degradation of membrane proteins, such as stimulated growth factor receptors, lysosomal enzymes and lipids. In the ESCRT-III complex, it probably serves as an acceptor for the ESCRT-II complex on endosomal membranes. In Gallus gallus (Chicken), this protein is Charged multivesicular body protein 6 (CHMP6).